We begin with the raw amino-acid sequence, 699 residues long: DNA topoisomerase 1 (699 aa).

Basic and acidic residues-rich tracts occupy residues 1 to 15 (MAKSKVVEKDKKNEL) and 22 to 35 (IELKGQSKNEESKG). The tract at residues 1–37 (MAKSKVVEKDKKNELDNQSADIELKGQSKNEESKGGK) is disordered. Residues 38–146 (KKVIIVESPA…NIITFTEITE (109 aa)) form the Toprim domain. Residues glutamate 44 and aspartate 115 each contribute to the Mg(2+) site. The 424-residue stretch at 160-583 (DMNKVNAQLA…SFLKEFNKDL (424 aa)) folds into the Topo IA-type catalytic domain. An interaction with DNA region spans residues 194 to 199 (SAGRVQ). Catalysis depends on tyrosine 324, which acts as the O-(5'-phospho-DNA)-tyrosine intermediate. The C4-type zinc finger occupies 601-624 (CEDCSGNYKLKVGKYGLYLHCPNC). The tract at residues 649–699 (QESQEENGEKNSVQSEESSANSGNRKFYRKRRTSGSKKSSTKSASSKAKKK) is disordered. Residues 661–672 (VQSEESSANSGN) are compositionally biased toward polar residues. Basic residues predominate over residues 674-683 (KFYRKRRTSG). The segment covering 684–699 (SKKSSTKSASSKAKKK) has biased composition (low complexity).

It belongs to the type IA topoisomerase family. As to quaternary structure, monomer. Mg(2+) is required as a cofactor.

The enzyme catalyses ATP-independent breakage of single-stranded DNA, followed by passage and rejoining.. Functionally, releases the supercoiling and torsional tension of DNA, which is introduced during the DNA replication and transcription, by transiently cleaving and rejoining one strand of the DNA duplex. Introduces a single-strand break via transesterification at a target site in duplex DNA. The scissile phosphodiester is attacked by the catalytic tyrosine of the enzyme, resulting in the formation of a DNA-(5'-phosphotyrosyl)-enzyme intermediate and the expulsion of a 3'-OH DNA strand. The free DNA strand then undergoes passage around the unbroken strand, thus removing DNA supercoils. Finally, in the religation step, the DNA 3'-OH attacks the covalent intermediate to expel the active-site tyrosine and restore the DNA phosphodiester backbone. This chain is DNA topoisomerase 1, found in Fervidobacterium islandicum.